The primary structure comprises 224 residues: Putative ankyrin repeat protein R845 (224 aa).

8 ANK repeats span residues 1–14 (MVEYLVSLGADVRS), 15–44 (NYDHAIKSAFENGHLQVIKYLISLGSDVSM), 46–74 (YDYILLRASRNGYIDVVKYLIEQGVDPRT), 75–104 (NNDKAVRKASKNGRLEIVEYLVTLGADIRI), 105–134 (DNDSAVRWASKNGHIKTVEFLVAKGADIRA), 136–164 (NDYSLRHSSKHGHIKMVEYLVAQGADVRA), 165–194 (DNDYAIKWASGKGHLEVVKYLVEKGADFRA), and 196–224 (NDCAVKWASQTGRVEIVEYLVSKGAVCPY).

This Acanthamoeba polyphaga mimivirus (APMV) protein is Putative ankyrin repeat protein R845.